A 321-amino-acid polypeptide reads, in one-letter code: Phosphatidate cytidylyltransferase, mitochondrial (321 aa).

It belongs to the TAM41 family. Mg(2+) is required as a cofactor. It depends on Co(2+) as a cofactor. The cofactor is Cu(2+).

Its subcellular location is the mitochondrion inner membrane. The enzyme catalyses a 1,2-diacyl-sn-glycero-3-phosphate + CTP + H(+) = a CDP-1,2-diacyl-sn-glycerol + diphosphate. Its pathway is phospholipid metabolism; CDP-diacylglycerol biosynthesis; CDP-diacylglycerol from sn-glycerol 3-phosphate: step 3/3. Catalyzes the formation of CDP-diacylglycerol (CDP-DAG) from phosphatidic acid (PA) in the mitochondrial inner membrane. Required for the biosynthesis of the dimeric phospholipid cardiolipin, which stabilizes supercomplexes of the mitochondrial respiratory chain in the mitochondrial inner membrane. In Caenorhabditis briggsae, this protein is Phosphatidate cytidylyltransferase, mitochondrial.